The primary structure comprises 505 residues: RNA-splicing ligase RtcB homolog (505 aa).

5 residues coordinate Mn(2+): Asp-119, Cys-122, His-227, His-259, and His-353. 226-230 (NHYAE) is a GMP binding site. GMP contacts are provided by residues 353–354 (HN), 402–405 (GGTM), Ser-409, 428–431 (HGAG), and Lys-504. The active-site GMP-histidine intermediate is the His-428.

This sequence belongs to the RtcB family. In terms of assembly, catalytic component of the tRNA-splicing ligase complex. Requires Mn(2+) as cofactor.

Its subcellular location is the nucleus. The protein localises to the cytoplasm. It catalyses the reaction a 3'-end 3'-phospho-ribonucleotide-RNA + a 5'-end dephospho-ribonucleoside-RNA + GTP = a ribonucleotidyl-ribonucleotide-RNA + GMP + diphosphate. The catalysed reaction is a 3'-end 2',3'-cyclophospho-ribonucleotide-RNA + a 5'-end dephospho-ribonucleoside-RNA + GTP + H2O = a ribonucleotidyl-ribonucleotide-RNA + GMP + diphosphate + H(+). Its function is as follows. Catalytic subunit of the tRNA-splicing ligase complex that acts by directly joining spliced tRNA halves to mature-sized tRNAs by incorporating the precursor-derived splice junction phosphate into the mature tRNA as a canonical 3',5'-phosphodiester. May act as an RNA ligase with broad substrate specificity, and may function toward other RNAs. The polypeptide is RNA-splicing ligase RtcB homolog (Xenopus tropicalis (Western clawed frog)).